The following is a 1017-amino-acid chain: Probable beta-galactosidase B (1017 aa).

The first 20 residues, 1-20, serve as a signal peptide directing secretion; sequence MTRITKLCVLLLSSIGLLAA. Residue Asn23 is glycosylated (N-linked (GlcNAc...) asparagine). Tyr90 provides a ligand contact to substrate. The N-linked (GlcNAc...) asparagine glycan is linked to Asn100. The substrate site is built by Asn135, Ala136, and Glu137. Asn158 carries an N-linked (GlcNAc...) asparagine glycan. Substrate is bound at residue Asn195. Residue Glu196 is the Proton donor of the active site. The N-linked (GlcNAc...) asparagine glycan is linked to Asn211. Tyr265 contacts substrate. An intrachain disulfide couples Cys271 to Cys324. The active-site Nucleophile is the Glu308. Position 373 (Tyr373) interacts with substrate. 11 N-linked (GlcNAc...) asparagine glycosylation sites follow: Asn411, Asn417, Asn456, Asn628, Asn681, Asn737, Asn770, Asn777, Asn785, Asn828, and Asn829.

This sequence belongs to the glycosyl hydrolase 35 family.

Its subcellular location is the secreted. The catalysed reaction is Hydrolysis of terminal non-reducing beta-D-galactose residues in beta-D-galactosides.. Cleaves beta-linked terminal galactosyl residues from gangliosides, glycoproteins, and glycosaminoglycans. This Aspergillus niger (strain ATCC MYA-4892 / CBS 513.88 / FGSC A1513) protein is Probable beta-galactosidase B (lacB).